The primary structure comprises 293 residues: uncharacterized protein (293 aa).

Positions 1–22 (MTFNEGVQIDTSTTSTSGSGGG) are disordered. The helical transmembrane segment at 25 to 45 (LAIGGGLGGLLVVVVAMLLGV) threads the bilayer. The disordered stretch occupies residues 243-265 (GDDRIQQQTTGRTNPETWTHGSA). Polar residues predominate over residues 248-265 (QQQTTGRTNPETWTHGSA).

The protein localises to the membrane. This is an uncharacterized protein from Mycobacterium tuberculosis (strain CDC 1551 / Oshkosh).